The following is a 176-amino-acid chain: Large ribosomal subunit protein uL5 (176 aa).

Belongs to the universal ribosomal protein uL5 family. In terms of assembly, part of the 50S ribosomal subunit; contacts the 5S rRNA and probably tRNA. Forms a bridge to the 30S subunit in the 70S ribosome.

Its function is as follows. This is one of the proteins that bind and probably mediate the attachment of the 5S RNA into the large ribosomal subunit, where it forms part of the central protuberance. In the 70S ribosome it contacts protein S13 of the 30S subunit (bridge B1b), connecting the 2 subunits; this bridge is implicated in subunit movement. May contact the P site tRNA; the 5S rRNA and some of its associated proteins might help stabilize positioning of ribosome-bound tRNAs. The protein is Large ribosomal subunit protein uL5 of Picrophilus torridus (strain ATCC 700027 / DSM 9790 / JCM 10055 / NBRC 100828 / KAW 2/3).